The chain runs to 356 residues: Histidinol-phosphate aminotransferase (356 aa).

Lysine 214 carries the N6-(pyridoxal phosphate)lysine modification.

Belongs to the class-II pyridoxal-phosphate-dependent aminotransferase family. Histidinol-phosphate aminotransferase subfamily. As to quaternary structure, homodimer. The cofactor is pyridoxal 5'-phosphate.

It catalyses the reaction L-histidinol phosphate + 2-oxoglutarate = 3-(imidazol-4-yl)-2-oxopropyl phosphate + L-glutamate. It functions in the pathway amino-acid biosynthesis; L-histidine biosynthesis; L-histidine from 5-phospho-alpha-D-ribose 1-diphosphate: step 7/9. This chain is Histidinol-phosphate aminotransferase, found in Shigella dysenteriae serotype 1 (strain Sd197).